A 501-amino-acid polypeptide reads, in one-letter code: Aspartyl/glutamyl-tRNA(Asn/Gln) amidotransferase subunit B (501 aa).

Residues 272 to 291 are disordered; sequence QETRHYQETDGTTSKGRPKE.

Belongs to the GatB/GatE family. GatB subfamily. Heterotrimer of A, B and C subunits.

It carries out the reaction L-glutamyl-tRNA(Gln) + L-glutamine + ATP + H2O = L-glutaminyl-tRNA(Gln) + L-glutamate + ADP + phosphate + H(+). The enzyme catalyses L-aspartyl-tRNA(Asn) + L-glutamine + ATP + H2O = L-asparaginyl-tRNA(Asn) + L-glutamate + ADP + phosphate + 2 H(+). Its function is as follows. Allows the formation of correctly charged Asn-tRNA(Asn) or Gln-tRNA(Gln) through the transamidation of misacylated Asp-tRNA(Asn) or Glu-tRNA(Gln) in organisms which lack either or both of asparaginyl-tRNA or glutaminyl-tRNA synthetases. The reaction takes place in the presence of glutamine and ATP through an activated phospho-Asp-tRNA(Asn) or phospho-Glu-tRNA(Gln). The chain is Aspartyl/glutamyl-tRNA(Asn/Gln) amidotransferase subunit B from Corynebacterium efficiens (strain DSM 44549 / YS-314 / AJ 12310 / JCM 11189 / NBRC 100395).